Reading from the N-terminus, the 172-residue chain is MAEQKSSYGYEELLACGRGEMFGPGNAQLPLPPMLMIHRITEISETGGAFDKGYIRAEYDVRPDDWYFPCHFQGNPIMPGCLGLDGMWQLTGFFLGWLGEPGRGMALSTGEVKFKGMVRPHTKLLEYGIDFKRVMRGRLVLGTADGWLKADGELIYQATDLRVGLSKEGSAQ.

H71 is an active-site residue.

It belongs to the thioester dehydratase family. FabA subfamily. Homodimer.

The protein localises to the cytoplasm. It carries out the reaction a (3R)-hydroxyacyl-[ACP] = a (2E)-enoyl-[ACP] + H2O. The catalysed reaction is (3R)-hydroxydecanoyl-[ACP] = (2E)-decenoyl-[ACP] + H2O. It catalyses the reaction (2E)-decenoyl-[ACP] = (3Z)-decenoyl-[ACP]. It functions in the pathway lipid metabolism; fatty acid biosynthesis. Its function is as follows. Necessary for the introduction of cis unsaturation into fatty acids. Catalyzes the dehydration of (3R)-3-hydroxydecanoyl-ACP to E-(2)-decenoyl-ACP and then its isomerization to Z-(3)-decenoyl-ACP. Can catalyze the dehydratase reaction for beta-hydroxyacyl-ACPs with saturated chain lengths up to 16:0, being most active on intermediate chain length. The protein is 3-hydroxydecanoyl-[acyl-carrier-protein] dehydratase of Brucella abortus (strain S19).